A 654-amino-acid chain; its full sequence is Macrolide export ATP-binding/permease protein MacB (654 aa).

Residues 6–244 (LKVEDLTRRF…EQAAKTPSAS (239 aa)) form the ABC transporter domain. 42 to 49 (GASGSGKS) lines the ATP pocket. 4 consecutive transmembrane segments (helical) span residues 280–300 (FLTM…VALG), 529–549 (LLIS…VMNI), 584–604 (LVCL…GFAF), and 619–639 (SIIW…FLPA).

This sequence belongs to the ABC transporter superfamily. Macrolide exporter (TC 3.A.1.122) family. Homodimer. Part of the tripartite efflux system MacAB-TolC, which is composed of an inner membrane transporter, MacB, a periplasmic membrane fusion protein, MacA, and an outer membrane component, TolC. The complex forms a large protein conduit and can translocate molecules across both the inner and outer membranes. Interacts with MacA.

The protein localises to the cell inner membrane. Part of the tripartite efflux system MacAB-TolC. MacB is a non-canonical ABC transporter that contains transmembrane domains (TMD), which form a pore in the inner membrane, and an ATP-binding domain (NBD), which is responsible for energy generation. Confers resistance against macrolides. This is Macrolide export ATP-binding/permease protein MacB from Vibrio parahaemolyticus serotype O3:K6 (strain RIMD 2210633).